The following is a 384-amino-acid chain: Bacterial ceramide synthase (384 aa).

It is found in the cytoplasm. The enzyme catalyses 3-oxosphinganine + a fatty acyl-CoA = N-acyl-3-oxosphinganine + CoA + H(+). It carries out the reaction 3-oxosphinganine + tetradecanoyl-CoA = N-tetradecanoyl-3-oxosphinganine + CoA + H(+). It catalyses the reaction 3-oxosphinganine + hexadecanoyl-CoA = N-hexadecanoyl-3-oxosphinganine + CoA + H(+). The catalysed reaction is 3-oxosphinganine + (9Z)-hexadecenoyl-CoA = N-(9Z-hexadecenoyl)-3-oxosphinganine + CoA + H(+). The enzyme catalyses 3-oxosphinganine + octanoyl-CoA = N-octanoyl-3-oxosphinganine + CoA + H(+). It carries out the reaction 3-oxosphinganine + decanoyl-CoA = N-decanoyl-3-oxosphinganine + CoA + H(+). It catalyses the reaction 3-oxosphinganine + dodecanoyl-CoA = N-dodecanoyl-3-oxosphinganine + CoA + H(+). The catalysed reaction is 3-oxosphinganine + octadecanoyl-CoA = N-octadecanoyl-3-oxosphinganine + CoA + H(+). The enzyme catalyses 3-oxosphinganine + eicosanoyl-CoA = N-eicosanoyl-3-oxosphinganine + CoA + H(+). It carries out the reaction 3-oxosphinganine + docosanoyl-CoA = N-docosanoyl-3-ketodihydrosphingosine + CoA + H(+). It catalyses the reaction 3-oxosphinganine + tetracosanoyl-CoA = N-tetracosanoyl-3-oxosphinganine + CoA + H(+). It functions in the pathway lipid metabolism; sphingolipid metabolism. Involved in de novo bacterial ceramide synthesis. Catalyzes the condensation of 3-oxosphinganine with an acyl-CoA to generate oxidized ceramides. Can use acyl-CoA substrates ranging from C8 to C24, with highest in vitro activity with C14 and very little activity with acyl-CoA thioesters of 18 carbons or longer. May have a preference for monounsaturated acyl-CoA substrates, as it has a threefold greater preference for C16:1-CoA over C16:0-CoA as a substrate in vitro. This Caulobacter vibrioides (strain NA1000 / CB15N) (Caulobacter crescentus) protein is Bacterial ceramide synthase.